The following is a 256-amino-acid chain: Tyrosine-protein kinase-interacting protein (256 aa).

The span at 1-14 shows a compositional bias: acidic residues; sequence MANEGEEIELTEFP. The segment at 1–49 is disordered; it reads MANEGEEIELTEFPETEKERKDEEKLSSCSEETTNTSSSSGSDHVPVPI. The Cytoplasmic portion of the chain corresponds to 1–228; sequence MANEGEEIEL…DLKRLENKIN (228 aa). A compositionally biased stretch (basic and acidic residues) spans 15–26; that stretch reads ETEKERKDEEKL. The span at 27–42 shows a compositional bias: low complexity; it reads SSCSEETTNTSSSSGS. Y114 is subject to Phosphotyrosine; by host LCK. At Y127 the chain carries Phosphotyrosine; by host. Residues 146–155 are CSKH/LBD2; that stretch reads EDLQSFLEKY. The interval 162–183 is disordered; that stretch reads PKRDLSATWDPGMPTPPLPPRP. The tract at residues 174–183 is SH3B/LBD1; that stretch reads MPTPPLPPRP. Over residues 174-183 the composition is skewed to pro residues; that stretch reads MPTPPLPPRP. A helical transmembrane segment spans residues 229–249; the sequence is VIICLVVVILAVLLLVTVLSI. Residues 250-256 lie on the Extracellular side of the membrane; it reads LHIGMKS.

In terms of assembly, binds host LCK, human WDR48 and human NXF1/TAP. Forms a complex with activated LCK and STAT1 and STAT3. Phosphorylation on Tyr-114 acts as a docking site for the recruitment of STATs 1 and 3.

The protein localises to the host cell membrane. Its function is as follows. Plays a critical role in virus induced T-cell transformation. Binds to T-cell-specific tyrosine kinase LCK SH2 and SH3 domains, thereby activating its kinase activity. Once phosphorylated by host LCK, forms a complex with at least STAT 1 and 3, resulting on the phosphorylation of STAT3 and presumably STAT1, and their migration into the nucleus to induce transcription of target genes. Stimulates host ILF3/NF-AT-90 activity. Association with host NXF1/TAP transduces the signal up-regulating surface expression of adhesion molecules as well as activating NF-kappa-B activity. Acts synergistically with StpC to stimulate NF-kappa-B activity and interleukin-2 gene expression. Activation of NF-kappa-B protects lymphocytes from apoptosis, thereby facilitating viral induced cell transformation. May cause down-regulation of host LCK and cell apoptosis when stably overexpressed ex vivo. Interaction with WDR48 induce degradation of T-cell receptor in a lysosome-dependent fashion, when both proteins are overexpressed. The biological effect of this interaction remains controversial since no T-cell receptor degradation is observed in infected cells. This is Tyrosine-protein kinase-interacting protein from Saimiri sciureus (Common squirrel monkey).